The sequence spans 443 residues: Probable D-serine dehydratase (443 aa).

N6-(pyridoxal phosphate)lysine is present on Lys-118.

This sequence belongs to the serine/threonine dehydratase family. DsdA subfamily. It depends on pyridoxal 5'-phosphate as a cofactor.

The enzyme catalyses D-serine = pyruvate + NH4(+). This is Probable D-serine dehydratase from Aeromonas salmonicida (strain A449).